The sequence spans 436 residues: MANIFEVPQPDNDLLEKAEKVRLASIKISQTENKNRIKALNFMADYLEKNSKEILEANNADYSSAEKKGISKALLSRLKLSRAKLNAGIEGVRKVGDLADPVNQVQIKKELSKGLILERKTVPIGVLGIIFESRPDAVMQISSLAIRSGNGVMLKGGSEANLTNTSIVKALQEGLNESGLDRNAICLLTSRKDSMAMLNLEKYINLIIPRGSNELVKFIQENTRIPVLGHADGICHLFIDIEANLEMALSVALDSKIQYPAACNAIETLLVHKDIAPAFLEKAIPLFNSNDVKLIGDNRSVELGLKYEASLQDWKTEYLDLILSIKIVNNVEEAITHIQKYSSKHTDGIITENSNTANKFMNVVDSSGVFHNCSTRFADGFRYGFGAEVGISTQTLPPRGPVGLEGLVTYKYFLKGGGHIVDDFSSGKAIYTHKDL.

The protein belongs to the gamma-glutamyl phosphate reductase family.

It localises to the cytoplasm. It carries out the reaction L-glutamate 5-semialdehyde + phosphate + NADP(+) = L-glutamyl 5-phosphate + NADPH + H(+). Its pathway is amino-acid biosynthesis; L-proline biosynthesis; L-glutamate 5-semialdehyde from L-glutamate: step 2/2. Functionally, catalyzes the NADPH-dependent reduction of L-glutamate 5-phosphate into L-glutamate 5-semialdehyde and phosphate. The product spontaneously undergoes cyclization to form 1-pyrroline-5-carboxylate. In Prochlorococcus marinus (strain MIT 9215), this protein is Gamma-glutamyl phosphate reductase.